Consider the following 1503-residue polypeptide: Transient receptor potential cation channel subfamily M member 2 (1503 aa).

Positions 1-20 (MEPSALRKAGSEQEEGFEGL) are disordered. Residues 1 to 752 (MEPSALRKAG…WWGQLSVDNG (752 aa)) lie on the Cytoplasmic side of the membrane. Residues threonine 174, asparagine 179, arginine 302, glycine 333, and threonine 336 each contribute to the ADP-D-ribose site. Threonine 740 is subject to Phosphothreonine. Residues 753–769 (LWRVTLCMLAFPLLLTG) lie within the membrane without spanning it. Topologically, residues 770–795 (LISFREKRLQDVGTPAARARAFFTAP) are cytoplasmic. The helical transmembrane segment at 796-816 (VVVFHLNILSYFAFLCLFAYV) threads the bilayer. Residues 817–827 (LMVDFQPVPSW) lie on the Extracellular side of the membrane. Residues 828 to 848 (CECAIYLWLFSLVCEEMRQLF) form a helical membrane-spanning segment. Residues glutamate 843 and glutamine 846 each contribute to the Ca(2+) site. Over 849-867 (YDPDECGLMKKAALYFSDF) the chain is Cytoplasmic. The chain crosses the membrane as a helical span at residues 868–888 (WNKLDVGAILLFVAGLTCRLI). A Ca(2+)-binding site is contributed by asparagine 869. Over 889–896 (PATLYPGR) the chain is Extracellular. A helical transmembrane segment spans residues 897–917 (VILSLDFILFCLRLMHIFTIS). Over 918–929 (KTLGPKIIIVKR) the chain is Cytoplasmic. Residues 930–950 (MMKDVFFFLFLLAVWVVSFGV) form a helical membrane-spanning segment. The Extracellular portion of the chain corresponds to 951–970 (AKQAILIHNERRVDWLFRGA). Positions 971 to 985 (VYHSYLTIFGQIPGY) form an intramembrane region, pore-forming. The Selectivity filter signature appears at 979 to 982 (FGQI). The Extracellular segment spans residues 986-1022 (IDGVNFNPEHCSPNGTDPYKPKCPESDATQQRPAFPE). A disulfide bond links cysteine 996 and cysteine 1008. Residues 1023-1044 (WLTVLLLCLYLLFTNILLLNLL) form a helical membrane-spanning segment. The Cytoplasmic portion of the chain corresponds to 1045-1079 (IAMFNYTFQQVQEHTDQIWKFQRHDLIEEYHGRPA). A Ca(2+)-binding site is contributed by glutamate 1073. An intramembrane segment occupies 1080-1098 (APPPFILLSHLQLFIKRVV). The Cytoplasmic segment spans residues 1099 to 1503 (LKTPAKRHKQ…KAAAEFGAHY (405 aa)). The segment at 1206–1237 (EADVPTLASQKAAEEPDAEPGGRKKTEEPGDS) is disordered. A Nudix hydrolase domain is found at 1354 to 1498 (RWRRNEDGAI…KTLLQKAAAE (145 aa)). ADP-D-ribose is bound by residues leucine 1381 and serine 1382. The Nudix box motif lies at 1390–1411 (GSREPGEMLPRKLKRILRQEHW). ADP-D-ribose-binding residues include aspartate 1431, arginine 1433, tyrosine 1485, and asparagine 1487.

It belongs to the transient receptor (TC 1.A.4) family. LTrpC subfamily. TRPM2 sub-subfamily. As to quaternary structure, homotetramer. Isoform 1 can interact with isoform 3. This interaction decreases Ca(2+) influx through isoform 1 and suppresses susceptibility to oxidative stress-induced cell death. Phosphorylation of TRPM2 at Thr-740 by protein kinase C (PKC) counteracts the effect of cytosolic Ca(2+) and elevates the temperature threshold. Highly expressed in brain and peripheral blood cells, such as neutrophils. Also detected in bone marrow, spleen, heart, liver and lung. Isoform 2 is found in neutrophil granulocytes.

Its subcellular location is the cell membrane. The protein localises to the perikaryon. It is found in the cell projection. The protein resides in the cytoplasmic vesicle. It localises to the lysosome. It carries out the reaction Ca(2+)(in) = Ca(2+)(out). The catalysed reaction is Na(+)(in) = Na(+)(out). Activated by intracellular ADP-ribose, beta-NAD (NAD(+)) and similar compounds, and by oxidative stress caused by reactive oxygen or nitrogen species. Ca(2+) and PI(4,5)P2 are required for channel opening by ADP-ribose. Activation by ADP-ribose and beta-NAD is strongly increased by moderate heat (35 to 40 degrees Celsius). Likewise, reactive oxygen species lower the threshold for activation by moderate heat (37 degrees Celsius). Activated by moderate heat (35 to 40 degrees Celsius). Inactivated by exposure to extracellular pH between 4.0 and 6.5; irreversibly inactivated when open channels are exposed to extracellular pH between 4.0 and 6.5, while pre-exposure of closed channels to extracellular pH 5.5 gives rise to currents that rapidly inactivate, but protects against irreversible inactivation. Inactivated by intracellular ATP. Activated by arachidonic acid. Inhibited by 2-aminoethyl diphenylborinate (2-APB). Nonselective, voltage-independent cation channel that mediates Na(+) and Ca(2+) influx, leading to increased cytoplasmic Ca(2+) levels. Functions as a ligand-gated ion channel, gated by intracellular adenosine diphosphate ribose (ADP-ribose), Ca(2+), warm temperature, and oxidative stress. The precise physiological activators are under debate; the true, physiological activators may be ADP-ribose and ADP-ribose-2'-phosphate. Binding of ADP-ribose to the cytoplasmic Nudix domain causes a conformation change; the channel is primed but still requires Ca(2+) binding to trigger channel opening. Extracellular Ca(2+) passes through the channel and increases channel activity. Contributes to Ca(2+) release from intracellular stores in response to ADP-ribose. Plays a role in numerous processes that involve signaling via intracellular Ca(2+) levels. Besides, mediates the release of lysosomal Zn(2+) stores in response to reactive oxygen species, leading to increased cytosolic Zn(2+) levels. Plays a role in mediating behavorial and physiological responses to moderate heat and thereby contributes to body temperature homeostasis. Plays a role in insulin secretion, a process that requires increased cytoplasmic Ca(2+) levels. Required for normal IFNG and cytokine secretion and normal innate immune immunity in response to bacterial infection. Required for normal phagocytosis and cytokine release by macrophages exposed to zymosan (in vitro). Plays a role in dendritic cell differentiation and maturation, and in dendritic cell chemotaxis via its role in regulating cytoplasmic Ca(2+) levels. Plays a role in the regulation of the reorganization of the actin cytoskeleton and filopodia formation in response to reactive oxygen species via its role in increasing cytoplasmic Ca(2+) and Zn(2+) levels. Confers susceptibility to cell death following oxidative stress. Functionally, lacks cation channel activity. Does not mediate cation transport in response to oxidative stress or ADP-ribose. Its function is as follows. Lacks cation channel activity and negatively regulates the channel activity of isoform 1. Negatively regulates susceptibility to cell death in reposponse to oxidative stress. The sequence is that of Transient receptor potential cation channel subfamily M member 2 (TRPM2) from Homo sapiens (Human).